We begin with the raw amino-acid sequence, 433 residues long: Transcobalamin-1 (433 aa).

Residues 1–23 form the signal peptide; sequence MRQSHQLPLVGLLLFSFIPSQLC. Positions 24–310 are globular N-terminal alpha domain; the sequence is EICEVSEENY…DINKDSSCVS (287 aa). Intrachain disulfides connect Cys26/Cys265, Cys105/Cys308, and Cys155/Cys197. Cyanocob(III)alamin is bound at residue 142–146; sequence TNYYQ. A glycan (N-linked (GlcNAc...) asparagine) is linked at Asn160. Asp186 contacts cyanocob(III)alamin. N-linked (GlcNAc...) asparagine glycosylation occurs at Asn216. Positions 240 and 289 each coordinate cyanocob(III)alamin. Residues 311–332 are flexible linker; it reads ASGNFNISADEPITVTPPDSQS. N-linked (GlcNAc...) asparagine glycans are attached at residues Asn316, Asn337, Asn343, Asn349, Asn354, and Asn369. Residues 333–433 are globular C-terminal beta domain; the sequence is YISVNYSVRI…ENLEVRWSKY (101 aa). A cyanocob(III)alamin-binding site is contributed by 385-386; sequence YI. Cys388 and Cys393 form a disulfide bridge. Cyanocob(III)alamin contacts are provided by residues 402–404, Leu411, and Tyr433; that span reads WEL.

It belongs to the eukaryotic cobalamin transport proteins family. Contains about 30% carbohydrates. As to expression, produced by the salivary glands of the oral cavity, in response to ingestion of food. Major constituent of secondary granules in neutrophils.

It localises to the secreted. In terms of biological role, binds vitamin B12 with femtomolar affinity and protects it from the acidic environment of the stomach. The polypeptide is Transcobalamin-1 (TCN1) (Homo sapiens (Human)).